Reading from the N-terminus, the 158-residue chain is Small ribosomal subunit protein uS9 (158 aa).

The protein belongs to the universal ribosomal protein uS9 family.

This is Small ribosomal subunit protein uS9 from Brucella melitensis biotype 2 (strain ATCC 23457).